The sequence spans 354 residues: tRNA N6-adenosine threonylcarbamoyltransferase (354 aa).

Positions 111 and 115 each coordinate Fe cation. Substrate contacts are provided by residues 134-138, Asp-167, Gly-180, and Asn-279; that span reads LVSGG. Position 319 (Asp-319) interacts with Fe cation.

It belongs to the KAE1 / TsaD family. Fe(2+) is required as a cofactor.

It localises to the cytoplasm. It carries out the reaction L-threonylcarbamoyladenylate + adenosine(37) in tRNA = N(6)-L-threonylcarbamoyladenosine(37) in tRNA + AMP + H(+). Functionally, required for the formation of a threonylcarbamoyl group on adenosine at position 37 (t(6)A37) in tRNAs that read codons beginning with adenine. Is involved in the transfer of the threonylcarbamoyl moiety of threonylcarbamoyl-AMP (TC-AMP) to the N6 group of A37, together with TsaE and TsaB. TsaD likely plays a direct catalytic role in this reaction. This is tRNA N6-adenosine threonylcarbamoyltransferase from Neisseria meningitidis serogroup A / serotype 4A (strain DSM 15465 / Z2491).